A 461-amino-acid chain; its full sequence is MNMHIVSPVLLLFWFGIIVTDGKLKSGFIGGSHHHEVNPIEGILRESLRSNRVQACDGERITLSCPRNTQISVQTGFYGRVVPENQLCPPQAGRKHSEANLDPLSMIHHSSTCDVIQAHTRISELCDKRRKCTVVVDSNTFEDDPCPTTSKYLQMAYGCIPMSFDEETFCTPKPTDPPRPEIRLECREGRRLAVYSAQMKTSPQCDPETEIRHECVSDVLPQVLRQCHAKEGCTLKSDGIKGHCRHGHLHVVYVCVNEEIFSEEAIKGELTSLETYLKEADAMQKQDDERFFKDVNDKTQWERVVDSEPAKDPDVHQIANDASYVTHDEYRMEKQDPPPITERVEPNLVGVGHDLLQVVQFFKENKEKAVMCIVLAVSMAAIVVLSACIITRLCSSNKDSSRSSRRSRSRRSLETSKLVSSNYGGSITPQHMMQDIEDEQFLRFSMGSAATSNPHYSHYDF.

The signal sequence occupies residues 1–22; that stretch reads MNMHIVSPVLLLFWFGIIVTDG. The SUEL-type lectin domain occupies 55-160; the sequence is ACDGERITLS…KYLQMAYGCI (106 aa). The chain crosses the membrane as a helical span at residues 370–390; it reads VMCIVLAVSMAAIVVLSACII. The interval 397 to 429 is disordered; that stretch reads NKDSSRSSRRSRSRRSLETSKLVSSNYGGSITP. Polar residues predominate over residues 415-429; it reads TSKLVSSNYGGSITP.

This sequence belongs to the EVA1 family. As to quaternary structure, interacts with sax-3. Interacts with slt-1. Interacts (via the SUEL-type lectin domain) with madd-4. Interacts (via the transmembrane domain) with unc-40.

Its subcellular location is the cell membrane. Acts as a receptor for slt-1. Required for the guidance of the AVM pioneer axon to the ventral nerve cord. Acts as a unc-40 coreceptor to enhance the sensitivity of unc-40 to the madd-4 midline guidance cue to guide muscle arm extensions (muscle arms) and AVM mechanosensory axons towards the dorsoventral midline. The sequence is that of Protein eva-1 (eva-1) from Caenorhabditis elegans.